A 186-amino-acid polypeptide reads, in one-letter code: UPF0157 protein SCO7215 (186 aa).

Belongs to the UPF0157 (GrpB) family.

This is UPF0157 protein SCO7215 from Streptomyces coelicolor (strain ATCC BAA-471 / A3(2) / M145).